A 383-amino-acid polypeptide reads, in one-letter code: Acetylornithine deacetylase (383 aa).

Position 80 (His-80) interacts with Zn(2+). Residue Asp-82 is part of the active site. A Zn(2+)-binding site is contributed by Asp-112. Glu-144 is an active-site residue. Positions 145, 169, and 355 each coordinate Zn(2+).

The protein belongs to the peptidase M20A family. ArgE subfamily. In terms of assembly, homodimer. Zn(2+) is required as a cofactor. Co(2+) serves as cofactor. The cofactor is glutathione.

Its subcellular location is the cytoplasm. The enzyme catalyses N(2)-acetyl-L-ornithine + H2O = L-ornithine + acetate. It functions in the pathway amino-acid biosynthesis; L-arginine biosynthesis; L-ornithine from N(2)-acetyl-L-ornithine (linear): step 1/1. Functionally, catalyzes the hydrolysis of the amide bond of N(2)-acetylated L-amino acids. Cleaves the acetyl group from N-acetyl-L-ornithine to form L-ornithine, an intermediate in L-arginine biosynthesis pathway, and a branchpoint in the synthesis of polyamines. The chain is Acetylornithine deacetylase from Salmonella agona (strain SL483).